The chain runs to 148 residues: MSKDGLSNDQVSSMKEAFMLFDTDGDGKIAPSELGILMRSLGGNPTESQLKSIITTENLSSPFDFNRFLDLMAKHLKTEPFDRQLRDAFKVLDKEGTGFVAVADLRHILTSIGEKLQPSEFDEWIKEVDVGSDGKIRYEDFIARMVAK.

EF-hand domains are found at residues 9 to 44 (DQVS…LGGN), 80 to 115 (PFDR…IGEK), and 116 to 148 (LQPS…MVAK). Residues aspartate 22, aspartate 24, aspartate 26, lysine 28, and glutamate 33 each coordinate Ca(2+).

In terms of biological role, potential calcium sensor. This Arabidopsis thaliana (Mouse-ear cress) protein is Probable calcium-binding protein CML14 (CML14).